The following is a 614-amino-acid chain: MFYFLGWFVMGIKGVGGSGHSDYPIPSHNGDGESEKNSSDSTSSKVNAKVTSSLQGAPSTNDENSVSPYSVVDVTDLIESGESSRHVIKKSIETEEAAHRESSVEGAGHSSRGIFGRLQAGLGRLARRVGEAVRNTVGSIFPQRAGAEQRTGKARTKYSPSASRGLRLMFTDFWRYRVLHRNPPMDGLFAKLDADEAEDMAAYTKEYVSNLEKRGAADRETIEHCQMVAKNWEKRARDLRDMGAAKKFLRDPFGKSDPKYKGTLPGEYTVGNTMFYDGPGVSKLSEVDTGFWLDMEKLSDAVLSANIQKGLRARFVLNQSIPQLESLEERFRKLESACDEARASLKEAGWIKEGKEPNKAQRAFRRFVEESRNLELSFGSFGESARRLSARVSQGLAAAGEAIRRCFDCRKGKYSLKKDLSSEELNLAEELIRFTDEMGIERDPDGNYNIPWVENWRTGVPVIEGEGAEHIYETMMPVQESFEQVYEVMDMGLEERRDFAVSQQHYQVPPRSSLNYETPRFREYDVPRNSARSYYDVPRVPPQNEVEEMHVTKGMRSSVYACFVAGMRNYIVSQPQEQIPNSEQVEQLFQELINDGDQIIQELMKIWNEELDNQ.

The tract at residues 23–68 (YPIPSHNGDGESEKNSSDSTSSKVNAKVTSSLQGAPSTNDENSVSP) is disordered. Positions 49 to 68 (KVTSSLQGAPSTNDENSVSP) are enriched in polar residues.

It to C.trachomatis CT875.

This is an uncharacterized protein from Chlamydia muridarum (strain MoPn / Nigg).